The primary structure comprises 415 residues: Histidine--tRNA ligase (415 aa).

The protein belongs to the class-II aminoacyl-tRNA synthetase family. In terms of assembly, homodimer.

It localises to the cytoplasm. It catalyses the reaction tRNA(His) + L-histidine + ATP = L-histidyl-tRNA(His) + AMP + diphosphate + H(+). This chain is Histidine--tRNA ligase, found in Clostridium botulinum (strain Loch Maree / Type A3).